We begin with the raw amino-acid sequence, 290 residues long: Phosphatidylserine decarboxylase proenzyme (290 aa).

Active-site charge relay system; for autoendoproteolytic cleavage activity residues include D96, H153, and S257. S257 acts as the Schiff-base intermediate with substrate; via pyruvic acid; for decarboxylase activity in catalysis. At S257 the chain carries Pyruvic acid (Ser); by autocatalysis.

It belongs to the phosphatidylserine decarboxylase family. PSD-B subfamily. Prokaryotic type I sub-subfamily. In terms of assembly, heterodimer of a large membrane-associated beta subunit and a small pyruvoyl-containing alpha subunit. It depends on pyruvate as a cofactor. In terms of processing, is synthesized initially as an inactive proenzyme. Formation of the active enzyme involves a self-maturation process in which the active site pyruvoyl group is generated from an internal serine residue via an autocatalytic post-translational modification. Two non-identical subunits are generated from the proenzyme in this reaction, and the pyruvate is formed at the N-terminus of the alpha chain, which is derived from the carboxyl end of the proenzyme. The autoendoproteolytic cleavage occurs by a canonical serine protease mechanism, in which the side chain hydroxyl group of the serine supplies its oxygen atom to form the C-terminus of the beta chain, while the remainder of the serine residue undergoes an oxidative deamination to produce ammonia and the pyruvoyl prosthetic group on the alpha chain. During this reaction, the Ser that is part of the protease active site of the proenzyme becomes the pyruvoyl prosthetic group, which constitutes an essential element of the active site of the mature decarboxylase.

The protein resides in the cell membrane. The catalysed reaction is a 1,2-diacyl-sn-glycero-3-phospho-L-serine + H(+) = a 1,2-diacyl-sn-glycero-3-phosphoethanolamine + CO2. The protein operates within phospholipid metabolism; phosphatidylethanolamine biosynthesis; phosphatidylethanolamine from CDP-diacylglycerol: step 2/2. Functionally, catalyzes the formation of phosphatidylethanolamine (PtdEtn) from phosphatidylserine (PtdSer). The chain is Phosphatidylserine decarboxylase proenzyme from Haemophilus influenzae (strain ATCC 51907 / DSM 11121 / KW20 / Rd).